The following is a 198-amino-acid chain: Pyridoxal 5'-phosphate synthase subunit PdxT (198 aa).

50-52 (GES) lines the L-glutamine pocket. The active-site Nucleophile is the Cys82. L-glutamine contacts are provided by residues Arg111 and 140–141 (IR). Catalysis depends on charge relay system residues His177 and Glu179.

Belongs to the glutaminase PdxT/SNO family. In the presence of PdxS, forms a dodecamer of heterodimers. Only shows activity in the heterodimer.

The enzyme catalyses aldehydo-D-ribose 5-phosphate + D-glyceraldehyde 3-phosphate + L-glutamine = pyridoxal 5'-phosphate + L-glutamate + phosphate + 3 H2O + H(+). It carries out the reaction L-glutamine + H2O = L-glutamate + NH4(+). The protein operates within cofactor biosynthesis; pyridoxal 5'-phosphate biosynthesis. Functionally, catalyzes the hydrolysis of glutamine to glutamate and ammonia as part of the biosynthesis of pyridoxal 5'-phosphate. The resulting ammonia molecule is channeled to the active site of PdxS. This chain is Pyridoxal 5'-phosphate synthase subunit PdxT, found in Leifsonia xyli subsp. xyli (strain CTCB07).